Reading from the N-terminus, the 102-residue chain is Small ubiquitin-related modifier 1 (102 aa).

A Ubiquitin-like domain is found at 21–98; that stretch reads DYIKLKVIGQ…IEVYQEQTGG (78 aa). Gly-98 participates in a covalent cross-link: Glycyl lysine isopeptide (Gly-Lys) (interchain with K-? in acceptor proteins). The propeptide occupies 99-102; it reads HSTI.

Belongs to the ubiquitin family. SUMO subfamily. Interacts with sae2, ube2i, ranbp2, pias1 and pias2. Interacts with sox9 and sox10. Covalently attached to a number of proteins. In terms of processing, cleavage of precursor form by a sentrin-specific protease is necessary for function.

It localises to the nucleus membrane. The protein localises to the nucleus speckle. The protein resides in the cytoplasm. It is found in the nucleus. Its subcellular location is the PML body. It localises to the cell membrane. In terms of biological role, ubiquitin-like protein that can be covalently attached to proteins as a monomer or a lysine-linked polymer. Covalent attachment via an isopeptide bond to its substrates requires prior activation by the E1 complex sae1-sae2 and linkage to the E2 enzyme ube2i. This post-translational modification on lysine residues of proteins plays a crucial role in a number of cellular processes such as nuclear transport, DNA replication and repair, mitosis and signal transduction. Polymeric sumo1 chains are also susceptible to polyubiquitination which functions as a signal for proteasomal degradation of modified proteins. In Xenopus tropicalis (Western clawed frog), this protein is Small ubiquitin-related modifier 1 (sumo1).